A 189-amino-acid chain; its full sequence is Putative manganese efflux pump MntP (189 aa).

6 consecutive transmembrane segments (helical) span residues 3-23 (LSAT…ASIG), 41-61 (LIFG…GLFA), 65-85 (IMEW…CRMI), 104-124 (FWVL…IGVG), 132-152 (IVHT…LGML), and 167-187 (IIGG…HMHL).

This sequence belongs to the MntP (TC 9.B.29) family.

It is found in the cell inner membrane. Its function is as follows. Probably functions as a manganese efflux pump. The chain is Putative manganese efflux pump MntP from Yersinia pseudotuberculosis serotype O:1b (strain IP 31758).